The sequence spans 268 residues: Glutamate racemase (268 aa).

Residues 9-10 and 41-42 contribute to the substrate site; these read DS and YG. Cys73 acts as the Proton donor/acceptor in catalysis. Substrate is bound at residue 74–75; the sequence is NS. Cys183 serves as the catalytic Proton donor/acceptor. 184–185 lines the substrate pocket; that stretch reads TH.

It belongs to the aspartate/glutamate racemases family.

It carries out the reaction L-glutamate = D-glutamate. Its pathway is cell wall biogenesis; peptidoglycan biosynthesis. Functionally, provides the (R)-glutamate required for cell wall biosynthesis. The polypeptide is Glutamate racemase (Shewanella pealeana (strain ATCC 700345 / ANG-SQ1)).